A 279-amino-acid chain; its full sequence is Methyltransferase ausD (279 aa).

S-adenosyl-L-methionine is bound by residues 124 to 125 (DL), 152 to 153 (DI), and R244.

This sequence belongs to the class I-like SAM-binding methyltransferase superfamily. In terms of assembly, homodimer.

Its pathway is secondary metabolite biosynthesis; terpenoid biosynthesis. Methyltransferase; part of the gene cluster that mediates the biosynthesis of calidodehydroaustin, a fungal meroterpenoid. The first step of the pathway is the synthesis of 3,5-dimethylorsellinic acid by the polyketide synthase ausA. 3,5-dimethylorsellinic acid is then prenylated by the polyprenyl transferase ausN. Further epoxidation by the FAD-dependent monooxygenase ausM and cyclization by the probable terpene cyclase ausL lead to the formation of protoaustinoid A. Protoaustinoid A is then oxidized to spiro-lactone preaustinoid A3 by the combined action of the FAD-binding monooxygenases ausB and ausC, and the dioxygenase ausE. Acid-catalyzed keto-rearrangement and ring contraction of the tetraketide portion of preaustinoid A3 by ausJ lead to the formation of preaustinoid A4. The aldo-keto reductase ausK, with the help of ausH, is involved in the next step by transforming preaustinoid A4 into isoaustinone which is in turn hydroxylated by the P450 monooxygenase ausI to form austinolide. The cytochrome P450 monooxygenase ausG modifies austinolide to austinol. Austinol is further acetylated to austin by the O-acetyltransferase ausP, which spontaneously changes to dehydroaustin. The cytochrome P450 monooxygenase ausR then converts dehydroaustin is into 7-dehydrodehydroaustin. The hydroxylation catalyzed by ausR permits the O-acetyltransferase ausQ to add an additional acetyl group to the molecule, leading to the formation of acetoxydehydroaustin. The short chain dehydrogenase ausT catalyzes the reduction of the double bond present between carbon atoms 1 and 2 to convert 7-dehydrodehydroaustin into 1,2-dihydro-7-hydroxydehydroaustin. AusQ catalyzes not only an acetylation reaction but also the addition of the PKS ausV diketide product to 1,2-dihydro-7-hydroxydehydroaustin, forming precalidodehydroaustin. Finally, the iron/alpha-ketoglutarate-dependent dioxygenase converts precalidodehydroaustin into calidodehydroaustin. In Aspergillus calidoustus, this protein is Methyltransferase ausD.